The sequence spans 458 residues: tRNA modification GTPase MnmE (458 aa).

Residues arginine 22, glutamate 84, and arginine 123 each coordinate (6S)-5-formyl-5,6,7,8-tetrahydrofolate. Residues 220–379 enclose the TrmE-type G domain; that stretch reads GIATAIIGRP…LEKAIADLFF (160 aa). Asparagine 230 is a binding site for K(+). Residues 230 to 235, 249 to 255, and 274 to 277 contribute to the GTP site; these read NVGKSS, TDIAGTT, and DTAG. Residue serine 234 participates in Mg(2+) binding. Residues threonine 249, isoleucine 251, and threonine 254 each coordinate K(+). Threonine 255 lines the Mg(2+) pocket. Lysine 458 lines the (6S)-5-formyl-5,6,7,8-tetrahydrofolate pocket.

This sequence belongs to the TRAFAC class TrmE-Era-EngA-EngB-Septin-like GTPase superfamily. TrmE GTPase family. Homodimer. Heterotetramer of two MnmE and two MnmG subunits. K(+) is required as a cofactor.

It localises to the cytoplasm. Exhibits a very high intrinsic GTPase hydrolysis rate. Involved in the addition of a carboxymethylaminomethyl (cmnm) group at the wobble position (U34) of certain tRNAs, forming tRNA-cmnm(5)s(2)U34. The chain is tRNA modification GTPase MnmE from Bacillus cereus (strain ZK / E33L).